The sequence spans 444 residues: Tubulin beta chain (444 aa).

Residues glutamine 11, glutamate 69, serine 138, glycine 142, threonine 143, glycine 144, asparagine 204, and asparagine 226 each contribute to the GTP site. Residue glutamate 69 participates in Mg(2+) binding.

The protein belongs to the tubulin family. In terms of assembly, dimer of alpha and beta chains. A typical microtubule is a hollow water-filled tube with an outer diameter of 25 nm and an inner diameter of 15 nM. Alpha-beta heterodimers associate head-to-tail to form protofilaments running lengthwise along the microtubule wall with the beta-tubulin subunit facing the microtubule plus end conferring a structural polarity. Microtubules usually have 13 protofilaments but different protofilament numbers can be found in some organisms and specialized cells. Mg(2+) is required as a cofactor.

The protein localises to the cytoplasm. Its subcellular location is the cytoskeleton. Functionally, tubulin is the major constituent of microtubules, a cylinder consisting of laterally associated linear protofilaments composed of alpha- and beta-tubulin heterodimers. Microtubules grow by the addition of GTP-tubulin dimers to the microtubule end, where a stabilizing cap forms. Below the cap, tubulin dimers are in GDP-bound state, owing to GTPase activity of alpha-tubulin. The protein is Tubulin beta chain of Trichuris trichiura (Whipworm).